Here is a 464-residue protein sequence, read N- to C-terminus: ATP synthase subunit beta (464 aa).

Gly-152–Thr-159 provides a ligand contact to ATP.

Belongs to the ATPase alpha/beta chains family. F-type ATPases have 2 components, CF(1) - the catalytic core - and CF(0) - the membrane proton channel. CF(1) has five subunits: alpha(3), beta(3), gamma(1), delta(1), epsilon(1). CF(0) has three main subunits: a(1), b(2) and c(9-12). The alpha and beta chains form an alternating ring which encloses part of the gamma chain. CF(1) is attached to CF(0) by a central stalk formed by the gamma and epsilon chains, while a peripheral stalk is formed by the delta and b chains.

The protein resides in the cell inner membrane. It carries out the reaction ATP + H2O + 4 H(+)(in) = ADP + phosphate + 5 H(+)(out). Produces ATP from ADP in the presence of a proton gradient across the membrane. The catalytic sites are hosted primarily by the beta subunits. The protein is ATP synthase subunit beta of Aliarcobacter butzleri (strain RM4018) (Arcobacter butzleri).